The following is a 145-amino-acid chain: Endosomal/vacuolar adapter protein YPT35 (145 aa).

The region spanning 32–145 (ISDVLVGEHH…STVVREFVLG (114 aa)) is the PX domain.

It belongs to the YPT35 family.

It localises to the endosome membrane. Its subcellular location is the vacuole membrane. Recruits the lipid transfer protein VPS13 to endosomal and vacuolar membranes. The chain is Endosomal/vacuolar adapter protein YPT35 (YPT35) from Meyerozyma guilliermondii (strain ATCC 6260 / CBS 566 / DSM 6381 / JCM 1539 / NBRC 10279 / NRRL Y-324) (Yeast).